Here is a 178-residue protein sequence, read N- to C-terminus: MHSSALLCCLVFLAGVAASRDASTLSDSSCIHLPTSLPHMLRELRAAFGKVKTFFQMKDQLHSLLLTQSLLDDFKGYLGCQALSEMIQFYLEEVMPQAENHGPDIKEHVNSLGEKLKTLRLRLRRCHRFLPCENKSKAVEKVKRVFSELQERGVYKAMSEFDIFINYIETYMTTKMQK.

The signal sequence occupies residues 1–18; the sequence is MHSSALLCCLVFLAGVAA. Disulfide bonds link cysteine 30–cysteine 126 and cysteine 80–cysteine 132. A glycan (N-linked (GlcNAc...) asparagine) is linked at asparagine 134.

Belongs to the IL-10 family. Homodimer. Interacts with IL10RA and IL10RB.

It localises to the secreted. Major immune regulatory cytokine that acts on many cells of the immune system where it has profound anti-inflammatory functions, limiting excessive tissue disruption caused by inflammation. Mechanistically, IL10 binds to its heterotetrameric receptor comprising IL10RA and IL10RB leading to JAK1 and STAT2-mediated phosphorylation of STAT3. In turn, STAT3 translocates to the nucleus where it drives expression of anti-inflammatory mediators. Targets antigen-presenting cells (APCs) such as macrophages and monocytes and inhibits their release of pro-inflammatory cytokines including granulocyte-macrophage colony-stimulating factor /GM-CSF, granulocyte colony-stimulating factor/G-CSF, IL-1 alpha, IL-1 beta, IL-6, IL-8 and TNF-alpha. Also interferes with antigen presentation by reducing the expression of MHC-class II and co-stimulatory molecules, thereby inhibiting their ability to induce T cell activation. In addition, controls the inflammatory response of macrophages by reprogramming essential metabolic pathways including mTOR signaling. The polypeptide is Interleukin-10 (IL10) (Bos taurus (Bovine)).